We begin with the raw amino-acid sequence, 157 residues long: Lipoprotein signal peptidase (157 aa).

The next 4 helical transmembrane spans lie at 10 to 30, 36 to 56, 58 to 78, and 84 to 104; these read LVFIGVFFLIFGVDQAIKHAI, YESLMIDIVLVFNKGVAFSLL, FLEGGLKYLQILLILGLFIFL, and LFKNHAIEFGMVFGAGVSNVL. Catalysis depends on residues aspartate 114 and aspartate 131. Residues 122–142 traverse the membrane as a helical segment; it reads FDFAIFNFADVMIDVGVGVLL.

Belongs to the peptidase A8 family.

Its subcellular location is the cell inner membrane. The enzyme catalyses Release of signal peptides from bacterial membrane prolipoproteins. Hydrolyzes -Xaa-Yaa-Zaa-|-(S,diacylglyceryl)Cys-, in which Xaa is hydrophobic (preferably Leu), and Yaa (Ala or Ser) and Zaa (Gly or Ala) have small, neutral side chains.. The protein operates within protein modification; lipoprotein biosynthesis (signal peptide cleavage). In terms of biological role, this protein specifically catalyzes the removal of signal peptides from prolipoproteins. The protein is Lipoprotein signal peptidase of Helicobacter pylori (strain P12).